The primary structure comprises 527 residues: Neutrophil cytosol factor 2 (527 aa).

TPR repeat units lie at residues 37–70 (SRIC…DKHL), 71–104 (AVSY…LRGN), and 121–154 (CEVL…KSEP). Thr-233 bears the Phosphothreonine mark. An SH3 1 domain is found at 240–299 (LEGEAHRVLFGFVPETPEELQVMPGNIVFVLKKGNDNWATVMFNGQKGLVPCNYLEPVEL). Residues 304-345 (QQQPQEETSLESDIPAPPSSSAPGRPQLSPGQKGKEEPKQEI) form a disordered region. Ser-324 bears the Phosphoserine mark. A compositionally biased stretch (basic and acidic residues) spans 336-345 (KGKEEPKQEI). In terms of domain architecture, PB1 spans 352–430 (SYTLKVHYKY…YCLTLWCENT (79 aa)). Phosphoserine is present on Ser-400. The disordered stretch occupies residues 434–457 (QGFPDEPEESKKSDANNQTTEPEL). The SH3 2 domain occupies 458-517 (KEGSKVVALFSYEATQPEDLEFLEGDVILVISTVNEQWLEGECKGKVGIFPKAFVEQHPT).

It belongs to the NCF2/NOXA1 family. Component of the phagocyte NADPH oxidase complex composed of an obligatory core heterodimer formed by the membrane proteins CYBA and CYBB and the cytosolic regulatory subunits NCF1/p47-phox, NCF2/p67-phox, NCF4/p40-phox and the small GTPase RAC1 or RAC2. Part of a cytosolic complex composed at least by NCF1, NCF2 and NCF4. Interacts with NCF4. Interacts (via the C-terminal SH3 domain) with NCF1 (via C-terminus). Interacts with SYTL1 and RAC1. May interact with NOXO1. Interacts with S100A8 and calprotectin (S100A8/9). Interacts with GBP7 (via GB1/RHD3-type G domain). Interacts with CYBB; the interaction is enhanced in the presence of GBP7.

It is found in the cytoplasm. Subunit of the phagocyte NADPH oxidase complex that mediates the transfer of electrons from cytosolic NADPH to O2 to produce the superoxide anion (O2(-)). In the activated complex, electrons are first transferred from NADPH to flavin adenine dinucleotide (FAD) and subsequently transferred via two heme molecules to molecular oxygen, producing superoxide through an outer-sphere reaction. Activation of the NADPH oxidase complex is initiated by the assembly of cytosolic subunits of the NADPH oxidase complex with the core NADPH oxidase complex to form a complex at the plasma membrane or phagosomal membrane. This activation process is initiated by phosphorylation dependent binding of the cytosolic NCF1/p47-phox subunit to the C-terminus of CYBA/p22-phox. This chain is Neutrophil cytosol factor 2, found in Bos taurus (Bovine).